The following is a 431-amino-acid chain: Galactose-3-O-sulfotransferase 3 (431 aa).

Residues 1 to 19 lie on the Cytoplasmic side of the membrane; the sequence is MPPILQRLQQATKMMSRRK. A helical; Signal-anchor for type II membrane protein transmembrane segment spans residues 20 to 40; the sequence is ILLLVLGCSTVSLLIHQGAQL. Residues 41–431 are Lumenal-facing; that stretch reads SWYPKLFPLS…RVLPRGPQGP (391 aa). Asn91, Asn110, Asn177, and Asn302 each carry an N-linked (GlcNAc...) asparagine glycan. The interval 399–431 is disordered; the sequence is QKRRGGARARPEPVLDNPPPRPIRVLPRGPQGP.

The protein belongs to the galactose-3-O-sulfotransferase family. Mg(2+) serves as cofactor. In terms of tissue distribution, highly expressed in thyroid, brain, kidney, heart and spinal cord.

It localises to the golgi apparatus. The protein resides in the golgi stack membrane. It participates in protein modification; carbohydrate sulfation. In terms of biological role, transfers a sulfate to position 3 of non-reducing beta-galactosyl residues in N-glycans and core2-branched O-glycans. Has high activity towards Gal-beta-1,4-GlcNAc, Gal-beta-1,4(Fuc-alpha-1,3)GlcNAc and lower activity towards Gal-beta-1,3(Fuc-alpha-1,4)GlcNAc. This Homo sapiens (Human) protein is Galactose-3-O-sulfotransferase 3 (GAL3ST3).